The chain runs to 142 residues: Nucleoside diphosphate kinase (142 aa).

The ATP site is built by lysine 11, phenylalanine 59, arginine 87, threonine 93, arginine 104, and asparagine 114. Histidine 117 acts as the Pros-phosphohistidine intermediate in catalysis.

This sequence belongs to the NDK family. Homotetramer. It depends on Mg(2+) as a cofactor.

The protein localises to the cytoplasm. The catalysed reaction is dZDP + ATP = dZTP + ADP. It carries out the reaction a 2'-deoxyribonucleoside 5'-diphosphate + ATP = a 2'-deoxyribonucleoside 5'-triphosphate + ADP. The enzyme catalyses a ribonucleoside 5'-diphosphate + ATP = a ribonucleoside 5'-triphosphate + ADP. It participates in purine metabolism. Functionally, major role in the synthesis of nucleoside triphosphates other than ATP. The ATP gamma phosphate is transferred to the NDP beta phosphate via a ping-pong mechanism, using a phosphorylated active-site intermediate. (Microbial infection) Catalyzes the phosphorylation of dZDP to dZTP, when the bacterium is infected by a phage that produces the substrate for the synthesis of dZTP (2- amino-2'-deoxyadenosine 5'-triphosphate), which is then used by the phage as a DNA polymerase substrate. The sequence is that of Nucleoside diphosphate kinase from Vibrio cholerae serotype O1 (strain ATCC 39315 / El Tor Inaba N16961).